A 504-amino-acid chain; its full sequence is Transcription factor NDT80 (504 aa).

Disordered regions lie at residues 64–172 (MHFN…QHHM), 283–310 (NGFP…NQHA), and 477–504 (RGRS…TPPQ). Composition is skewed to low complexity over residues 73–87 (QQQQ…QQQQ), 103–145 (QGPT…ARQP), 153–172 (QQAQ…QHHM), and 292–301 (HPQNQPQNHP). The segment at residues 160 to 488 (QADAQSQAQQ…RSPSSYHKDR (329 aa)) is a DNA-binding region (NDT80).

The protein localises to the nucleus. Its function is as follows. Meiosis-specific transcription factor that binds to the middle sporulation element (MSE) of targeted genes corresponding to the consensus sequence 5'-ACACAAA-3'. Acts as an activator of CDR1 induction by antifungal drugs. Modulates azole sensitivity by controlling the expression of ergosterol biosynthesis genes. Required for hyphal growth in response to different filament-inducing cues and for the proper expression of genes characterizing the filamentous transcriptional program including noteworthy genes encoding cell wall components, such as HWP1, ECE1, RBT4, and ALS3. Is essential for the completion of cell separation through the direct transcriptional regulation of genes encoding the chitinase CHT3 and the cell wall glucosidase SUN41. Required for biofilm formation and plays a key role in microcolony formation under both flow and static conditions and to epithelial surfaces. Essential for virulence. This is Transcription factor NDT80 from Candida albicans (strain SC5314 / ATCC MYA-2876) (Yeast).